Reading from the N-terminus, the 209-residue chain is Thymidylate kinase (209 aa).

11–18 lines the ATP pocket; the sequence is GPDGAGKT.

This sequence belongs to the thymidylate kinase family.

The enzyme catalyses dTMP + ATP = dTDP + ADP. Its function is as follows. Phosphorylation of dTMP to form dTDP in both de novo and salvage pathways of dTTP synthesis. The sequence is that of Thymidylate kinase from Streptococcus thermophilus (strain ATCC BAA-250 / LMG 18311).